The primary structure comprises 258 residues: Aspartate/glutamate leucyltransferase (258 aa).

Belongs to the R-transferase family. Bpt subfamily.

The protein localises to the cytoplasm. It carries out the reaction N-terminal L-glutamyl-[protein] + L-leucyl-tRNA(Leu) = N-terminal L-leucyl-L-glutamyl-[protein] + tRNA(Leu) + H(+). It catalyses the reaction N-terminal L-aspartyl-[protein] + L-leucyl-tRNA(Leu) = N-terminal L-leucyl-L-aspartyl-[protein] + tRNA(Leu) + H(+). Functionally, functions in the N-end rule pathway of protein degradation where it conjugates Leu from its aminoacyl-tRNA to the N-termini of proteins containing an N-terminal aspartate or glutamate. The sequence is that of Aspartate/glutamate leucyltransferase from Rhodopseudomonas palustris (strain ATCC BAA-98 / CGA009).